The sequence spans 120 residues: uncharacterized protein (120 aa).

Positions 1 to 27 are cleaved as a signal peptide; it reads MPKIGVSLIVLIMLIIFLAGCNKNEQN.

This is an uncharacterized protein from Bacillus subtilis (strain 168).